Consider the following 360-residue polypeptide: Phenylalanine--tRNA ligase alpha subunit (360 aa).

Mg(2+) is bound at residue Glu-260.

It belongs to the class-II aminoacyl-tRNA synthetase family. Phe-tRNA synthetase alpha subunit type 1 subfamily. Tetramer of two alpha and two beta subunits. The cofactor is Mg(2+).

It localises to the cytoplasm. It carries out the reaction tRNA(Phe) + L-phenylalanine + ATP = L-phenylalanyl-tRNA(Phe) + AMP + diphosphate + H(+). The sequence is that of Phenylalanine--tRNA ligase alpha subunit from Bradyrhizobium sp. (strain ORS 278).